Consider the following 102-residue polypeptide: NADH-quinone oxidoreductase subunit K (102 aa).

3 consecutive transmembrane segments (helical) span residues 6–26, 30–50, and 63–83; these read LIGI…GVLA, MLFQ…GFIA, and MFIL…ALFL.

Belongs to the complex I subunit 4L family. NDH-1 is composed of 14 different subunits. Subunits NuoA, H, J, K, L, M, N constitute the membrane sector of the complex.

It is found in the cell inner membrane. It catalyses the reaction a quinone + NADH + 5 H(+)(in) = a quinol + NAD(+) + 4 H(+)(out). NDH-1 shuttles electrons from NADH, via FMN and iron-sulfur (Fe-S) centers, to quinones in the respiratory chain. The immediate electron acceptor for the enzyme in this species is believed to be ubiquinone. Couples the redox reaction to proton translocation (for every two electrons transferred, four hydrogen ions are translocated across the cytoplasmic membrane), and thus conserves the redox energy in a proton gradient. This chain is NADH-quinone oxidoreductase subunit K, found in Rhodopseudomonas palustris (strain TIE-1).